A 556-amino-acid polypeptide reads, in one-letter code: Formate--tetrahydrofolate ligase (556 aa).

65–72 (TPAGEGKS) is a binding site for ATP.

The protein belongs to the formate--tetrahydrofolate ligase family.

The enzyme catalyses (6S)-5,6,7,8-tetrahydrofolate + formate + ATP = (6R)-10-formyltetrahydrofolate + ADP + phosphate. It participates in one-carbon metabolism; tetrahydrofolate interconversion. This Streptococcus equi subsp. zooepidemicus (strain MGCS10565) protein is Formate--tetrahydrofolate ligase.